Reading from the N-terminus, the 251-residue chain is CDP-diacylglycerol pyrophosphatase (251 aa).

Residues 4 to 24 traverse the membrane as a helical segment; that stretch reads AGLLFLVMIVIAVVAAGIGYW.

This sequence belongs to the Cdh family.

The protein resides in the cell inner membrane. It catalyses the reaction a CDP-1,2-diacyl-sn-glycerol + H2O = a 1,2-diacyl-sn-glycero-3-phosphate + CMP + 2 H(+). The protein operates within phospholipid metabolism; CDP-diacylglycerol degradation; phosphatidate from CDP-diacylglycerol: step 1/1. This chain is CDP-diacylglycerol pyrophosphatase, found in Escherichia coli O81 (strain ED1a).